A 1066-amino-acid polypeptide reads, in one-letter code: DNA-directed RNA polymerase subunit beta (1066 aa).

It belongs to the RNA polymerase beta chain family. In terms of assembly, in plastids the minimal PEP RNA polymerase catalytic core is composed of four subunits: alpha, beta, beta', and beta''. When a (nuclear-encoded) sigma factor is associated with the core the holoenzyme is formed, which can initiate transcription.

The protein localises to the plastid. The protein resides in the chloroplast. The enzyme catalyses RNA(n) + a ribonucleoside 5'-triphosphate = RNA(n+1) + diphosphate. Functionally, DNA-dependent RNA polymerase catalyzes the transcription of DNA into RNA using the four ribonucleoside triphosphates as substrates. This is DNA-directed RNA polymerase subunit beta from Psilotum nudum (Whisk fern).